The sequence spans 697 residues: Elongation factor G 2 (697 aa).

A tr-type G domain is found at 5–280; the sequence is SLYRNIGIFA…AVVDYLPSPT (276 aa). Residues 14–21, 78–82, and 132–135 contribute to the GTP site; these read AHVDAGKT, DTPGH, and NKLD.

Belongs to the TRAFAC class translation factor GTPase superfamily. Classic translation factor GTPase family. EF-G/EF-2 subfamily.

It is found in the cytoplasm. Catalyzes the GTP-dependent ribosomal translocation step during translation elongation. During this step, the ribosome changes from the pre-translocational (PRE) to the post-translocational (POST) state as the newly formed A-site-bound peptidyl-tRNA and P-site-bound deacylated tRNA move to the P and E sites, respectively. Catalyzes the coordinated movement of the two tRNA molecules, the mRNA and conformational changes in the ribosome. This Saccharophagus degradans (strain 2-40 / ATCC 43961 / DSM 17024) protein is Elongation factor G 2.